Reading from the N-terminus, the 294-residue chain is tRNA dimethylallyltransferase (294 aa).

9 to 16 (GPTASGKS) provides a ligand contact to ATP. 11-16 (TASGKS) is a substrate binding site. An interaction with substrate tRNA region spans residues 155–159 (QRVIR).

This sequence belongs to the IPP transferase family. As to quaternary structure, monomer. The cofactor is Mg(2+).

The enzyme catalyses adenosine(37) in tRNA + dimethylallyl diphosphate = N(6)-dimethylallyladenosine(37) in tRNA + diphosphate. Its function is as follows. Catalyzes the transfer of a dimethylallyl group onto the adenine at position 37 in tRNAs that read codons beginning with uridine, leading to the formation of N6-(dimethylallyl)adenosine (i(6)A). This is tRNA dimethylallyltransferase from Leuconostoc citreum (strain KM20).